Here is a 428-residue protein sequence, read N- to C-terminus: C4-dicarboxylate transport protein (428 aa).

The next 9 helical transmembrane spans lie at 8–28, 44–64, 76–96, 142–162, 184–204, 222–242, 289–309, 326–346, and 352–372; these read SLYV…HFYP, LIKM…IAGM, VALL…LIIV, IGAF…LFGF, VIFG…FGAM, LIIC…GSIA, VVGL…SIYL, IFHQ…AAGV, and IVLA…LALI.

This sequence belongs to the dicarboxylate/amino acid:cation symporter (DAACS) (TC 2.A.23) family.

The protein localises to the cell inner membrane. Responsible for the transport of dicarboxylates such as succinate, fumarate, and malate from the periplasm across the membrane. This chain is C4-dicarboxylate transport protein, found in Klebsiella pneumoniae (strain 342).